Here is a 292-residue protein sequence, read N- to C-terminus: Ribosomal RNA small subunit methyltransferase A (292 aa).

The S-adenosyl-L-methionine site is built by N29, L31, G56, E77, D102, and N127.

Belongs to the class I-like SAM-binding methyltransferase superfamily. rRNA adenine N(6)-methyltransferase family. RsmA subfamily.

It is found in the cytoplasm. The enzyme catalyses adenosine(1518)/adenosine(1519) in 16S rRNA + 4 S-adenosyl-L-methionine = N(6)-dimethyladenosine(1518)/N(6)-dimethyladenosine(1519) in 16S rRNA + 4 S-adenosyl-L-homocysteine + 4 H(+). Functionally, specifically dimethylates two adjacent adenosines (A1518 and A1519) in the loop of a conserved hairpin near the 3'-end of 16S rRNA in the 30S particle. May play a critical role in biogenesis of 30S subunits. This Bacillus subtilis (strain 168) protein is Ribosomal RNA small subunit methyltransferase A.